A 452-amino-acid chain; its full sequence is tRNA-2-methylthio-N(6)-dimethylallyladenosine synthase (452 aa).

Residues 3–118 enclose the MTTase N-terminal domain; the sequence is KKVFIKTYGC…LPQLLAERER (116 aa). [4Fe-4S] cluster-binding residues include Cys12, Cys49, Cys81, Cys155, Cys159, and Cys162. Residues 141-379 form the Radical SAM core domain; sequence RVEGASAFVS…QTVINDSIKR (239 aa). The TRAM domain maps to 382–445; the sequence is ESRLGTVQRI…SFTLRGEVVT (64 aa).

Belongs to the methylthiotransferase family. MiaB subfamily. As to quaternary structure, monomer. [4Fe-4S] cluster serves as cofactor.

Its subcellular location is the cytoplasm. It carries out the reaction N(6)-dimethylallyladenosine(37) in tRNA + (sulfur carrier)-SH + AH2 + 2 S-adenosyl-L-methionine = 2-methylsulfanyl-N(6)-dimethylallyladenosine(37) in tRNA + (sulfur carrier)-H + 5'-deoxyadenosine + L-methionine + A + S-adenosyl-L-homocysteine + 2 H(+). Functionally, catalyzes the methylthiolation of N6-(dimethylallyl)adenosine (i(6)A), leading to the formation of 2-methylthio-N6-(dimethylallyl)adenosine (ms(2)i(6)A) at position 37 in tRNAs that read codons beginning with uridine. This Albidiferax ferrireducens (strain ATCC BAA-621 / DSM 15236 / T118) (Rhodoferax ferrireducens) protein is tRNA-2-methylthio-N(6)-dimethylallyladenosine synthase.